Reading from the N-terminus, the 804-residue chain is RasGAP-activating-like protein 1 (804 aa).

C2 domains are found at residues 1-105 (MAKS…DSWI) and 116-231 (VQGE…KGWF). Positions 21, 27, 74, 76, 82, 149, 155, 202, 204, and 210 each coordinate Ca(2+). One can recognise a Ras-GAP domain in the interval 317–545 (GLAGRFLDYL…SRVRDFLDRL (229 aa)). Residues 565 to 672 (AIVREGYLLK…WLSALRKASA (108 aa)) enclose the PH domain. The Btk-type zinc-finger motif lies at 674–710 (NPNKLAACHPGAFRSARWTCCLQAERSAAGCSRTHSA). Zn(2+) contacts are provided by His682, Cys693, Cys694, and Cys704.

It depends on Ca(2+) as a cofactor. In terms of tissue distribution, highly expressed in thyroid and adrenal medulla, lower expression in brain, spinal cord and trachea. Expressed in melanocytes.

Functionally, probable inhibitory regulator of the Ras-cyclic AMP pathway. Plays a role in dendrite formation by melanocytes. This is RasGAP-activating-like protein 1 from Homo sapiens (Human).